Here is an 802-residue protein sequence, read N- to C-terminus: Receptor-type tyrosine-protein phosphatase alpha (802 aa).

Residues Met1–Ala19 form the signal peptide. At Asn20–Pro151 the chain is on the extracellular side. N-linked (GlcNAc...) asparagine glycosylation is found at Asn21 and Asn36. Residues Thr39 to Leu59 are disordered. N-linked (GlcNAc...) asparagine glycosylation is found at Asn68, Asn80, Asn86, Asn104, and Asn124. Polar residues-rich tracts occupy residues Val79–Asp115 and Gly123–Ser141. Residues Val79–Arg146 are disordered. Residues Ile152–Met174 form a helical membrane-spanning segment. The Cytoplasmic segment spans residues Leu175–Lys802. Phosphoserine is present on residues Ser211 and Ser213. 2 Tyrosine-protein phosphatase domains span residues Phe241–His501 and Leu533–Tyr791. Substrate is bound by residues Asp410, Cys442–Arg448, and Gln486. Catalysis depends on Cys442, which acts as the Phosphocysteine intermediate. Cys732 (phosphocysteine intermediate) is an active-site residue. Phosphotyrosine is present on Tyr798.

The protein belongs to the protein-tyrosine phosphatase family. Receptor class 4 subfamily. In terms of assembly, part of a complex comprised of PTPRA, BCAR1, BCAR3 (via SH2 domain), and SRC. Within the complex, interacts (when phosphorylated on Tyr-798) with BCAR3 (via SH2 domain). Interacts with GRB2. Integrin binding to extracellular matrix induces phosphorylation at Tyr-798 which induces PTPRA localization and recruitment of BCAR3, BCAR1 and CRK to focal adhesions.

Its subcellular location is the cell membrane. It is found in the cell junction. It localises to the focal adhesion. The enzyme catalyses O-phospho-L-tyrosyl-[protein] + H2O = L-tyrosyl-[protein] + phosphate. In terms of biological role, tyrosine protein phosphatase which is involved in integrin-mediated focal adhesion formation. Following integrin engagement, specifically recruits BCAR3, BCAR1 and CRK to focal adhesions thereby promoting SRC-mediated phosphorylation of BRAC1 and the subsequent activation of PAK and small GTPase RAC1 and CDC42. This is Receptor-type tyrosine-protein phosphatase alpha (PTPRA) from Homo sapiens (Human).